A 522-amino-acid chain; its full sequence is Protein nucleotidyltransferase YdiU (522 aa).

The ATP site is built by Gly-109, Gly-111, Arg-112, Lys-132, Asp-144, Gly-145, Arg-195, and Arg-202. The Proton acceptor role is filled by Asp-271. Residues Asn-272 and Asp-281 each contribute to the Mg(2+) site. An ATP-binding site is contributed by Asp-281.

The protein belongs to the SELO family. The cofactor is Mg(2+). Mn(2+) serves as cofactor.

The enzyme catalyses L-seryl-[protein] + ATP = 3-O-(5'-adenylyl)-L-seryl-[protein] + diphosphate. It catalyses the reaction L-threonyl-[protein] + ATP = 3-O-(5'-adenylyl)-L-threonyl-[protein] + diphosphate. The catalysed reaction is L-tyrosyl-[protein] + ATP = O-(5'-adenylyl)-L-tyrosyl-[protein] + diphosphate. It carries out the reaction L-histidyl-[protein] + UTP = N(tele)-(5'-uridylyl)-L-histidyl-[protein] + diphosphate. The enzyme catalyses L-seryl-[protein] + UTP = O-(5'-uridylyl)-L-seryl-[protein] + diphosphate. It catalyses the reaction L-tyrosyl-[protein] + UTP = O-(5'-uridylyl)-L-tyrosyl-[protein] + diphosphate. Its function is as follows. Nucleotidyltransferase involved in the post-translational modification of proteins. It can catalyze the addition of adenosine monophosphate (AMP) or uridine monophosphate (UMP) to a protein, resulting in modifications known as AMPylation and UMPylation. This Burkholderia ambifaria (strain ATCC BAA-244 / DSM 16087 / CCUG 44356 / LMG 19182 / AMMD) (Burkholderia cepacia (strain AMMD)) protein is Protein nucleotidyltransferase YdiU.